The chain runs to 303 residues: Recombination-associated protein RdgC (303 aa).

Belongs to the RdgC family.

Its subcellular location is the cytoplasm. It localises to the nucleoid. Its function is as follows. May be involved in recombination. This chain is Recombination-associated protein RdgC, found in Enterobacter sp. (strain 638).